Consider the following 622-residue polypeptide: Polypeptide N-acetylgalactosaminyltransferase 6 (622 aa).

Topologically, residues 1-8 (MRLLRRRH) are cytoplasmic. Residues 9 to 28 (MAVRLVMVGSAFVLFLFILQ) form a helical; Signal-anchor for type II membrane protein membrane-spanning segment. Residues 29-622 (RDVSGREQAT…SDPHQHWLFI (594 aa)) lie on the Lumenal side of the membrane. N-linked (GlcNAc...) asparagine glycosylation occurs at N86. The interval 103-135 (WERPPQDPNGPGADGKAFQKKEWTPQETQEKEE) is disordered. Basic and acidic residues predominate over residues 119 to 135 (AFQKKEWTPQETQEKEE). The segment at 176–285 (LPATSVIIVF…HGWLEPLLAR (110 aa)) is catalytic subdomain A. Residues D269, H271, and H407 each contribute to the Mn(2+) site. The interval 348-410 (PIKSPTFAGG…PCSVVGHVFR (63 aa)) is catalytic subdomain B. A glycan (N-linked (GlcNAc...) asparagine) is linked at N476. One can recognise a Ricin B-type lectin domain in the interval 507–622 (DHCLDVGENN…SDPHQHWLFI (116 aa)). A disulfide bridge connects residues C509 and C527. UDP-N-acetyl-alpha-D-galactosamine is bound by residues D511, E514, H528, and N533. Cystine bridges form between C553-C566 and C597-C610.

The protein belongs to the glycosyltransferase 2 family. GalNAc-T subfamily. Requires Mn(2+) as cofactor.

The protein resides in the golgi apparatus membrane. The catalysed reaction is L-seryl-[protein] + UDP-N-acetyl-alpha-D-galactosamine = a 3-O-[N-acetyl-alpha-D-galactosaminyl]-L-seryl-[protein] + UDP + H(+). The enzyme catalyses L-threonyl-[protein] + UDP-N-acetyl-alpha-D-galactosamine = a 3-O-[N-acetyl-alpha-D-galactosaminyl]-L-threonyl-[protein] + UDP + H(+). Its pathway is protein modification; protein glycosylation. Catalyzes the initial reaction in O-linked oligosaccharide biosynthesis, the transfer of an N-acetyl-D-galactosamine residue to a serine or threonine residue on the protein receptor. May participate in synthesis of oncofetal fibronectin. Has activity toward MUC1A, MUC2, EA2 and fibronectin peptides. The polypeptide is Polypeptide N-acetylgalactosaminyltransferase 6 (GALNT6) (Bos taurus (Bovine)).